We begin with the raw amino-acid sequence, 324 residues long: NAD kinase (324 aa).

The Proton acceptor role is filled by Asp89. NAD(+) contacts are provided by residues 89–90 (DG), Arg94, 163–164 (NE), Asp193, and 204–209 (TAYAFS).

The protein belongs to the NAD kinase family. Requires a divalent metal cation as cofactor.

It localises to the cytoplasm. It carries out the reaction NAD(+) + ATP = ADP + NADP(+) + H(+). In terms of biological role, involved in the regulation of the intracellular balance of NAD and NADP, and is a key enzyme in the biosynthesis of NADP. Catalyzes specifically the phosphorylation on 2'-hydroxyl of the adenosine moiety of NAD to yield NADP. The protein is NAD kinase of Nocardia farcinica (strain IFM 10152).